The chain runs to 20 residues: Fibrinogen beta chain (20 aa).

Y5 is modified (sulfotyrosine).

As to quaternary structure, heterohexamer; disulfide linked. Contains 2 sets of 3 non-identical chains (alpha, beta and gamma). The 2 heterotrimers are in head to head conformation with the N-termini in a small central domain. In terms of processing, conversion of fibrinogen to fibrin is triggered by thrombin, which cleaves fibrinopeptides A and B from alpha and beta chains, and thus exposes the N-terminal polymerization sites responsible for the formation of the soft clot.

It localises to the secreted. Cleaved by the protease thrombin to yield monomers which, together with fibrinogen alpha (FGA) and fibrinogen gamma (FGG), polymerize to form an insoluble fibrin matrix. Fibrin has a major function in hemostasis as one of the primary components of blood clots. In addition, functions during the early stages of wound repair to stabilize the lesion and guide cell migration during re-epithelialization. Was originally thought to be essential for platelet aggregation, based on in vitro studies using anticoagulated blood. However subsequent studies have shown that it is not absolutely required for thrombus formation in vivo. Enhances expression of SELP in activated platelets. Maternal fibrinogen is essential for successful pregnancy. Fibrin deposition is also associated with infection, where it protects against IFNG-mediated hemorrhage. May also facilitate the antibacterial immune response via both innate and T-cell mediated pathways. The chain is Fibrinogen beta chain (FGB) from Capra hircus (Goat).